A 148-amino-acid polypeptide reads, in one-letter code: UPF0178 protein SUN_1096 (148 aa).

Belongs to the UPF0178 family.

The chain is UPF0178 protein SUN_1096 from Sulfurovum sp. (strain NBC37-1).